The primary structure comprises 338 residues: DNA-directed RNA polymerase subunit alpha (338 aa).

The interval 1 to 225 (MLISQRPTLT…ELFGLARELN (225 aa)) is alpha N-terminal domain (alpha-NTD). The tract at residues 242–338 (YIAAYGMPIE…YIDTDPEETE (97 aa)) is alpha C-terminal domain (alpha-CTD). The segment at 314–338 (FDPTQLDGYDAATGDYIDTDPEETE) is disordered.

Belongs to the RNA polymerase alpha chain family. Homodimer. The RNAP catalytic core consists of 2 alpha, 1 beta, 1 beta' and 1 omega subunit. When a sigma factor is associated with the core the holoenzyme is formed, which can initiate transcription.

It catalyses the reaction RNA(n) + a ribonucleoside 5'-triphosphate = RNA(n+1) + diphosphate. In terms of biological role, DNA-dependent RNA polymerase catalyzes the transcription of DNA into RNA using the four ribonucleoside triphosphates as substrates. This chain is DNA-directed RNA polymerase subunit alpha, found in Corynebacterium diphtheriae (strain ATCC 700971 / NCTC 13129 / Biotype gravis).